The sequence spans 279 residues: MKTKTDFLKMKEQGEPITMLTAYDYPSAKLAEEAEVDMILVGDSLGMVVLGYDSTVPVTVEDMIHHTKAVRRGAKETFIVTDMPFMSYHVSLQDTMVNARRIVQESGAHALKVEGAGEVISTIHYLTNAGIPVVAHLGLTPQSVGVLGGYKVQGKDAESAKKLIEDAKKCEEAGAIALVLECVPMQLAELISEQLTIPTIGIGAGQKVDGQVLVYHDLISYGVNRVPKFVKQYTSVQEEIVRGISQYVAEVKTRQFPEEKHSFTMKEEECLALYGGKQS.

Mg(2+) contacts are provided by aspartate 43 and aspartate 82. Residues 43–44 (DS), aspartate 82, and lysine 112 each bind 3-methyl-2-oxobutanoate. A Mg(2+)-binding site is contributed by glutamate 114. The active-site Proton acceptor is glutamate 181.

This sequence belongs to the PanB family. As to quaternary structure, homodecamer; pentamer of dimers. Requires Mg(2+) as cofactor.

It localises to the cytoplasm. It carries out the reaction 3-methyl-2-oxobutanoate + (6R)-5,10-methylene-5,6,7,8-tetrahydrofolate + H2O = 2-dehydropantoate + (6S)-5,6,7,8-tetrahydrofolate. The protein operates within cofactor biosynthesis; (R)-pantothenate biosynthesis; (R)-pantoate from 3-methyl-2-oxobutanoate: step 1/2. In terms of biological role, catalyzes the reversible reaction in which hydroxymethyl group from 5,10-methylenetetrahydrofolate is transferred onto alpha-ketoisovalerate to form ketopantoate. The protein is 3-methyl-2-oxobutanoate hydroxymethyltransferase of Bacillus anthracis (strain A0248).